The chain runs to 417 residues: PRKCA-binding protein (417 aa).

In terms of domain architecture, PDZ spans Lys-22–Gln-105. Zn(2+) is bound by residues Cys-44 and Cys-46. Position 82 is a phosphothreonine (Thr-82). In terms of domain architecture, AH spans Leu-144–Val-357. The tract at residues Gln-375–Ser-417 is disordered. Positions Glu-377 to Ala-393 are enriched in acidic residues. A lipid anchor (S-palmitoyl cysteine; by DHHC8) is attached at Cys-415.

In terms of assembly, monomer and homodimer. Interacts with CXADR. Interacts presynaptically with the glutamate receptors GRIA2, GRIA3, GRIK3, isoform 3 of GRIA4, isoform A of GRM4, GRM7 and GRM8; with NAPA and NAPB; and with BTG2. The interaction with NAPA and NAPB disrupts the interaction with GRIA2, conducting to the internalization of GRIA2. Interacts with PRKCA; with the amine transporters SLC6A2 and SLC6A3; with the channels ASIC1 and ASIC2; with the GTP-binding proteins ARF1 and ARF3; with the ephrin receptor tyrosine kinases EPHA7, EPHB1 and EPHB2; with ERBB2 and through its PDZ domain with the C-terminal tail of PRLHR. Interacts with UNC5A. Interacts (via AH domain) with NCS1/FREQ; in a calcium-dependent manner. Interacts with F-actin and associates with the ARP2/3 complex. Interacts (via PDZ domain) with ARF1 (activated); the interaction blocks Arp2/3 complex inhibition. Interacts with SORCS3. Post-translationally, phosphorylation at Thr-82 appears to inhibit the interaction with AMPA receptors. Palmitoylation on Cys-415 is essential for long-term synaptic depression (LTD).

The protein localises to the cytoplasm. It is found in the perinuclear region. Its subcellular location is the membrane. The protein resides in the postsynaptic density. It localises to the synapse. The protein localises to the synaptosome. It is found in the cytoskeleton. Its function is as follows. Probable adapter protein that bind to and organize the subcellular localization of a variety of membrane proteins containing some PDZ recognition sequence. Involved in the clustering of various receptors, possibly by acting at the receptor internalization level. Plays a role in synaptic plasticity by regulating the trafficking and internalization of AMPA receptors. May be regulated upon PRKCA activation. May regulate ASIC1/ASIC3 channel. Regulates actin polymerization by inhibiting the actin-nucleating activity of the Arp2/3 complex; the function is competitive with nucleation promoting factors and is linked to neuronal morphology regulation and AMPA receptor (AMPAR) endocytosis. Via interaction with the Arp2/3 complex involved in regulation of synaptic plasicity of excitatory synapses and required for spine shrinkage during long-term depression (LTD). Involved in regulation of astrocyte morphology, antagonistic to Arp2/3 complex activator WASL/N-WASP function. The sequence is that of PRKCA-binding protein (PICK1) from Bos taurus (Bovine).